A 606-amino-acid chain; its full sequence is Endo-beta-1,4-xylanase Xyn10C (606 aa).

The first 19 residues, 1-19 (MKKIQQLLMLSLISSTLIA), serve as a signal peptide directing secretion. A lipid anchor (N-palmitoyl cysteine) is attached at C20. The S-diacylglycerol cysteine moiety is linked to residue C20. Residues 23-64 (GGGGGSTPTTSSSPQSSSPASTPSSASSSSIISSSSLSSSLS) form a disordered region. The span at 29-64 (TPTTSSSPQSSSPASTPSSASSSSIISSSSLSSSLS) shows a compositional bias: low complexity. The region spanning 91–242 (GNVVIEVDMA…KSVTITLAQE (152 aa)) is the CBM15 domain. A carbohydrate is bound by residues N106 and Q171. C183 and C200 are disulfide-bonded. An a carbohydrate-binding site is contributed by Q217. The 352-residue stretch at 245 to 596 (SANVDHLRDL…KPALRGFADA (352 aa)) folds into the GH10 domain. Substrate is bound by residues 296–299 (NIMK), H332, and N384. E385 serves as the catalytic Proton donor. The active-site Nucleophile is E497. W552 is a substrate binding site.

It belongs to the glycosyl hydrolase 10 (cellulase F) family.

It is found in the cell outer membrane. The enzyme catalyses Endohydrolysis of (1-&gt;4)-beta-D-xylosidic linkages in xylans.. Its pathway is glycan degradation; xylan degradation. Endo-acting xylanase which specifically cleaves internal linkages on the xylan backbone, releasing xylooligosaccharides. Is able to hydrolyze oat spelt xylan, the arabinoxylans from wheat and rye, and glucuronoxylan. Also displays very low activity against xylooligosaccharides. During the xylan degradation process, Xyn10C may act on the soluble xylans and long xylooligosaccharides products released by the secreted xylanases Xyn11A, Xyn11B and Xyn10A. This chain is Endo-beta-1,4-xylanase Xyn10C (xyn10C), found in Cellvibrio japonicus (Pseudomonas fluorescens subsp. cellulosa).